The sequence spans 238 residues: MGRKWANIVAKKTAKDGATSKVYAKFGVEIYVAAKQGEPDPELNTALKFVIDRAKQAQVPKHVIDKAIDKAKGNTDETFVEGRYEGFGPNGSMIIVDTLTSNVNRTAANVRTAYGKNGGNMGASGSVSYLFDKKGVIVFAGDDADSVFEQLLEADVDVDDVEAEEGTITVYTAPTDLHKGIQALRDNGVEEFQVTELEMIPQSEVVLEGDDLETFEKLIDALESDDDVQKVYHNVADF.

This sequence belongs to the TACO1 family. YeeN subfamily.

The protein resides in the cytoplasm. The chain is Probable transcriptional regulatory protein MGAS2096_Spy0287 from Streptococcus pyogenes serotype M12 (strain MGAS2096).